Reading from the N-terminus, the 496-residue chain is Lysine--tRNA ligase (496 aa).

Mg(2+) is bound by residues E409 and E416.

Belongs to the class-II aminoacyl-tRNA synthetase family. In terms of assembly, homodimer. It depends on Mg(2+) as a cofactor.

Its subcellular location is the cytoplasm. It carries out the reaction tRNA(Lys) + L-lysine + ATP = L-lysyl-tRNA(Lys) + AMP + diphosphate. In Streptococcus pneumoniae serotype 4 (strain ATCC BAA-334 / TIGR4), this protein is Lysine--tRNA ligase.